The primary structure comprises 92 residues: Small ribosomal subunit protein uS19c (92 aa).

Belongs to the universal ribosomal protein uS19 family.

The protein resides in the plastid. It localises to the chloroplast. Protein S19 forms a complex with S13 that binds strongly to the 16S ribosomal RNA. This chain is Small ribosomal subunit protein uS19c, found in Chara vulgaris (Common stonewort).